A 520-amino-acid polypeptide reads, in one-letter code: Ubiquitin carboxyl-terminal hydrolase MINDY-1 (520 aa).

The interval 1-155 (MADSCADTVD…ENEGAVAGAM (155 aa)) is disordered. The span at 26–37 (KNEDLEQTKPQK) shows a compositional bias: basic and acidic residues. Polar residues predominate over residues 43-54 (TEESSACVSQIK). A compositionally biased stretch (low complexity) spans 77–86 (ATSSASVTSK). Polar residues-rich tracts occupy residues 93–112 (VINS…SFSM) and 132–146 (SAKS…SVQE). The active-site Nucleophile is Cys-189. The active-site Proton acceptor is His-371. Disordered stretches follow at residues 422-441 (SQKP…QQMQ) and 467-520 (ELAR…CCIL). A ubiquitin-binding domain (UBD) region spans residues 441-479 (QIDQDYLVAMSLQQEQGEAPGPLSDLELARQLQQEEYQQ). A compositionally biased stretch (low complexity) spans 469-498 (ARQLQQEEYQQPQTQQQQQQQPSAGQMRGQ). A compositionally biased stretch (basic and acidic residues) spans 511 to 520 (KKEETDCCIL).

It belongs to the MINDY deubiquitinase family. FAM63 subfamily.

It catalyses the reaction Thiol-dependent hydrolysis of ester, thioester, amide, peptide and isopeptide bonds formed by the C-terminal Gly of ubiquitin (a 76-residue protein attached to proteins as an intracellular targeting signal).. Functionally, hydrolase that can specifically remove 'Lys-48'-linked conjugated ubiquitin from proteins. May play a regulatory role at the level of protein turnover. The polypeptide is Ubiquitin carboxyl-terminal hydrolase MINDY-1 (mindy1) (Danio rerio (Zebrafish)).